We begin with the raw amino-acid sequence, 280 residues long: Phosphatidylglycerol--prolipoprotein diacylglyceryl transferase (280 aa).

The next 3 membrane-spanning stretches (helical) occupy residues 21-41 (WYGIIMAVAIVLATWMAISEG), 54-74 (LLLWAVPLGYVGARIYYVIFE), and 88-108 (IWNGGIAIYGGLIAGLIVLLI). Arg136 provides a ligand contact to a 1,2-diacyl-sn-glycero-3-phospho-(1'-sn-glycerol). A run of 3 helical transmembrane segments spans residues 176–196 (QPTFLYESFFNLIGLIIILSL), 206–226 (GEVFMSYLLWYSVVRFFVEGM), and 236–256 (IIRVSQALSLVLFIATIILWI).

This sequence belongs to the Lgt family.

It is found in the cell membrane. The enzyme catalyses L-cysteinyl-[prolipoprotein] + a 1,2-diacyl-sn-glycero-3-phospho-(1'-sn-glycerol) = an S-1,2-diacyl-sn-glyceryl-L-cysteinyl-[prolipoprotein] + sn-glycerol 1-phosphate + H(+). It participates in protein modification; lipoprotein biosynthesis (diacylglyceryl transfer). Its function is as follows. Catalyzes the transfer of the diacylglyceryl group from phosphatidylglycerol to the sulfhydryl group of the N-terminal cysteine of a prolipoprotein, the first step in the formation of mature lipoproteins. The chain is Phosphatidylglycerol--prolipoprotein diacylglyceryl transferase from Lactobacillus acidophilus (strain ATCC 700396 / NCK56 / N2 / NCFM).